The primary structure comprises 371 residues: 2-aminoethylphosphonate--pyruvate transaminase (371 aa).

Lys-198 carries the post-translational modification N6-(pyridoxal phosphate)lysine.

It belongs to the class-V pyridoxal-phosphate-dependent aminotransferase family. PhnW subfamily. In terms of assembly, homodimer. The cofactor is pyridoxal 5'-phosphate.

It catalyses the reaction (2-aminoethyl)phosphonate + pyruvate = phosphonoacetaldehyde + L-alanine. Its function is as follows. Involved in phosphonate degradation. This chain is 2-aminoethylphosphonate--pyruvate transaminase, found in Syntrophobacter fumaroxidans (strain DSM 10017 / MPOB).